Reading from the N-terminus, the 373-residue chain is Glycerol-3-phosphate dehydrogenase [NAD(+)] 2 (373 aa).

Ser-15 bears the Phosphoserine mark. Residues 31–36 (GSGNWG), Phe-123, Lys-146, and Ala-179 each bind NAD(+). Lys-146 lines the substrate pocket. The Proton acceptor role is filled by Lys-236. 2 residues coordinate NAD(+): Arg-300 and Gln-329. 300–301 (RN) is a substrate binding site.

Belongs to the NAD-dependent glycerol-3-phosphate dehydrogenase family.

Its subcellular location is the cytoplasm. The enzyme catalyses sn-glycerol 3-phosphate + NAD(+) = dihydroxyacetone phosphate + NADH + H(+). This chain is Glycerol-3-phosphate dehydrogenase [NAD(+)] 2 (gpd2), found in Schizosaccharomyces pombe (strain 972 / ATCC 24843) (Fission yeast).